Here is a 231-residue protein sequence, read N- to C-terminus: Ribose-5-phosphate isomerase A (231 aa).

Substrate is bound by residues 32 to 35 (TGST), 85 to 88 (DGAD), and 98 to 101 (KGGG). Residue E107 is the Proton acceptor of the active site. Residue K125 coordinates substrate.

This sequence belongs to the ribose 5-phosphate isomerase family. As to quaternary structure, homodimer.

The catalysed reaction is aldehydo-D-ribose 5-phosphate = D-ribulose 5-phosphate. Its pathway is carbohydrate degradation; pentose phosphate pathway; D-ribose 5-phosphate from D-ribulose 5-phosphate (non-oxidative stage): step 1/1. Catalyzes the reversible conversion of ribose-5-phosphate to ribulose 5-phosphate. This Burkholderia orbicola (strain MC0-3) protein is Ribose-5-phosphate isomerase A.